The following is a 33-amino-acid chain: Rugosin-B (33 aa).

An intrachain disulfide couples cysteine 27 to cysteine 33.

It belongs to the frog skin active peptide (FSAP) family. Brevinin subfamily. As to expression, expressed by the skin glands.

The protein resides in the secreted. Functionally, shows antibacterial activity against both Gram-negative and Gram-positive bacteria. In Glandirana rugosa (Japanese wrinkled frog), this protein is Rugosin-B.